Here is a 186-residue protein sequence, read N- to C-terminus: TATA box-binding protein-like 1 (186 aa).

Belongs to the TBP family. As to quaternary structure, binds TFIIA and TFIIB.

The protein resides in the cytoplasm. The protein localises to the nucleus. Functionally, part of a specialized transcription system that mediates the transcription of most ribosomal proteins through the 5'-TCT-3' motif which is a core promoter element at these genes. Seems to also mediate the transcription of NF1. Does not bind the TATA box. The protein is TATA box-binding protein-like 1 (TBPL1) of Bos taurus (Bovine).